Reading from the N-terminus, the 484-residue chain is Allantoinase, mitochondrial (484 aa).

His-76, His-78, Lys-163, His-199, His-251, and Asp-324 together coordinate Zn(2+). At Lys-163 the chain carries N6-carboxylysine.

Belongs to the metallo-dependent hydrolases superfamily. Allantoinase family. Homotetramer. Zn(2+) is required as a cofactor. In terms of processing, carboxylation allows a single lysine to coordinate two zinc ions. As to expression, liver and kidney.

It localises to the mitochondrion. The enzyme catalyses (S)-allantoin + H2O = allantoate + H(+). The protein operates within nitrogen metabolism; (S)-allantoin degradation; allantoate from (S)-allantoin: step 1/1. This is Allantoinase, mitochondrial (ALN) from Aquarana catesbeiana (American bullfrog).